The sequence spans 312 residues: Ribonuclease H2 subunit B (312 aa).

Ala-2 is subject to N-acetylalanine. A disordered region spans residues 236 to 256; the sequence is EPSASLPNPPSKKIKLSDEPV. An N6-acetyllysine modification is found at Lys-295. Phosphoserine is present on Ser-296.

This sequence belongs to the RNase H2 subunit B family. As to quaternary structure, the RNase H2 complex is a heterotrimer composed of the catalytic subunit RNASEH2A and the non-catalytic subunits RNASEH2B and RNASEH2C. As to expression, widely expressed.

Its subcellular location is the nucleus. In terms of biological role, non catalytic subunit of RNase H2, an endonuclease that specifically degrades the RNA of RNA:DNA hybrids. Participates in DNA replication, possibly by mediating the removal of lagging-strand Okazaki fragment RNA primers during DNA replication. Mediates the excision of single ribonucleotides from DNA:RNA duplexes. The chain is Ribonuclease H2 subunit B (RNASEH2B) from Homo sapiens (Human).